Reading from the N-terminus, the 86-residue chain is MANIKSAKKRAVQSEKRRQHNASRRSMMRTYIKKVYAAVASGDKEAAQKAFNDMQPIVDRQATKGLIHKNKAARHKANLQAQIKAM.

Positions 1-27 are enriched in basic residues; it reads MANIKSAKKRAVQSEKRRQHNASRRSM. The segment at 1–28 is disordered; that stretch reads MANIKSAKKRAVQSEKRRQHNASRRSMM.

Belongs to the bacterial ribosomal protein bS20 family.

In terms of biological role, binds directly to 16S ribosomal RNA. The polypeptide is Small ribosomal subunit protein bS20 (Proteus mirabilis (strain HI4320)).